The chain runs to 595 residues: DNA primase (595 aa).

The segment at 38-62 adopts a CHC2-type zinc-finger fold; that stretch reads CPFHDEKTPSFIVYPTRGHYHCYGC. The Toprim domain maps to 251–331; sequence RRVILVEGQA…GITAIVCRLP (81 aa). Mg(2+) contacts are provided by glutamate 257, aspartate 302, and aspartate 304. Over residues 430 to 441 the composition is skewed to basic and acidic residues; sequence KGKKVSAKEPSS. The segment at 430–451 is disordered; the sequence is KGKKVSAKEPSSESKQTSTEGK.

It belongs to the DnaG primase family. In terms of assembly, monomer. Interacts with DnaB. Requires Zn(2+) as cofactor. Mg(2+) serves as cofactor.

It carries out the reaction ssDNA + n NTP = ssDNA/pppN(pN)n-1 hybrid + (n-1) diphosphate.. In terms of biological role, RNA polymerase that catalyzes the synthesis of short RNA molecules used as primers for DNA polymerase during DNA replication. The chain is DNA primase from Chlamydia trachomatis serovar D (strain ATCC VR-885 / DSM 19411 / UW-3/Cx).